We begin with the raw amino-acid sequence, 209 residues long: Thiamine-phosphate synthase (209 aa).

Residues 36 to 40 and Asn-68 contribute to the 4-amino-2-methyl-5-(diphosphooxymethyl)pyrimidine site; that span reads QYRDK. Residues Asp-69 and Asp-87 each contribute to the Mg(2+) site. Residue Thr-106 participates in 4-amino-2-methyl-5-(diphosphooxymethyl)pyrimidine binding. Residue 133–135 participates in 2-[(2R,5Z)-2-carboxy-4-methylthiazol-5(2H)-ylidene]ethyl phosphate binding; the sequence is SST. Lys-136 is a 4-amino-2-methyl-5-(diphosphooxymethyl)pyrimidine binding site. Gly-163 lines the 2-[(2R,5Z)-2-carboxy-4-methylthiazol-5(2H)-ylidene]ethyl phosphate pocket.

It belongs to the thiamine-phosphate synthase family. Requires Mg(2+) as cofactor.

It carries out the reaction 2-[(2R,5Z)-2-carboxy-4-methylthiazol-5(2H)-ylidene]ethyl phosphate + 4-amino-2-methyl-5-(diphosphooxymethyl)pyrimidine + 2 H(+) = thiamine phosphate + CO2 + diphosphate. The catalysed reaction is 2-(2-carboxy-4-methylthiazol-5-yl)ethyl phosphate + 4-amino-2-methyl-5-(diphosphooxymethyl)pyrimidine + 2 H(+) = thiamine phosphate + CO2 + diphosphate. The enzyme catalyses 4-methyl-5-(2-phosphooxyethyl)-thiazole + 4-amino-2-methyl-5-(diphosphooxymethyl)pyrimidine + H(+) = thiamine phosphate + diphosphate. It functions in the pathway cofactor biosynthesis; thiamine diphosphate biosynthesis; thiamine phosphate from 4-amino-2-methyl-5-diphosphomethylpyrimidine and 4-methyl-5-(2-phosphoethyl)-thiazole: step 1/1. Its function is as follows. Condenses 4-methyl-5-(beta-hydroxyethyl)thiazole monophosphate (THZ-P) and 2-methyl-4-amino-5-hydroxymethyl pyrimidine pyrophosphate (HMP-PP) to form thiamine monophosphate (TMP). This chain is Thiamine-phosphate synthase, found in Pseudomonas aeruginosa (strain LESB58).